We begin with the raw amino-acid sequence, 347 residues long: UPF0284 protein M1627_0030 (347 aa).

This sequence belongs to the UPF0284 family.

The protein is UPF0284 protein M1627_0030 of Saccharolobus islandicus (strain M.16.27) (Sulfolobus islandicus).